The chain runs to 318 residues: Thymidylate synthase (318 aa).

DUMP contacts are provided by residues arginine 25 and 180–181 (RR). Cysteine 200 functions as the Nucleophile in the catalytic mechanism. DUMP contacts are provided by residues 220–223 (RSGD), asparagine 231, and 261–263 (HIY). A (6R)-5,10-methylene-5,6,7,8-tetrahydrofolate-binding site is contributed by aspartate 223. Alanine 317 is a (6R)-5,10-methylene-5,6,7,8-tetrahydrofolate binding site.

This sequence belongs to the thymidylate synthase family. Bacterial-type ThyA subfamily. As to quaternary structure, homodimer.

It localises to the cytoplasm. It catalyses the reaction dUMP + (6R)-5,10-methylene-5,6,7,8-tetrahydrofolate = 7,8-dihydrofolate + dTMP. The protein operates within pyrimidine metabolism; dTTP biosynthesis. In terms of biological role, catalyzes the reductive methylation of 2'-deoxyuridine-5'-monophosphate (dUMP) to 2'-deoxythymidine-5'-monophosphate (dTMP) while utilizing 5,10-methylenetetrahydrofolate (mTHF) as the methyl donor and reductant in the reaction, yielding dihydrofolate (DHF) as a by-product. This enzymatic reaction provides an intracellular de novo source of dTMP, an essential precursor for DNA biosynthesis. The protein is Thymidylate synthase of Lactobacillus johnsonii (strain CNCM I-12250 / La1 / NCC 533).